Reading from the N-terminus, the 157-residue chain is MSKKQGKPEYVTAISNRKARFEYEILDTIEAGIELLGSEVKSVRLGKASLSESYAMIHHGQVWLENMQITPYEHNTLDTLEPKRSRRLLLHKAEIMRLQSKISEKGLTLIPLKAYFNKRGVLKIELGLARGKKLYDKRETIKNRDAKRQLQQLRKQY.

This sequence belongs to the SmpB family.

It is found in the cytoplasm. Required for rescue of stalled ribosomes mediated by trans-translation. Binds to transfer-messenger RNA (tmRNA), required for stable association of tmRNA with ribosomes. tmRNA and SmpB together mimic tRNA shape, replacing the anticodon stem-loop with SmpB. tmRNA is encoded by the ssrA gene; the 2 termini fold to resemble tRNA(Ala) and it encodes a 'tag peptide', a short internal open reading frame. During trans-translation Ala-aminoacylated tmRNA acts like a tRNA, entering the A-site of stalled ribosomes, displacing the stalled mRNA. The ribosome then switches to translate the ORF on the tmRNA; the nascent peptide is terminated with the 'tag peptide' encoded by the tmRNA and targeted for degradation. The ribosome is freed to recommence translation, which seems to be the essential function of trans-translation. The protein is SsrA-binding protein of Chlorobaculum tepidum (strain ATCC 49652 / DSM 12025 / NBRC 103806 / TLS) (Chlorobium tepidum).